The chain runs to 154 residues: SsrA-binding protein (154 aa).

The interval 126-154 (GKKKYDKREDMKKKEAQREVERAFRERQK) is disordered. The span at 131–154 (DKREDMKKKEAQREVERAFRERQK) shows a compositional bias: basic and acidic residues.

It belongs to the SmpB family.

Its subcellular location is the cytoplasm. Its function is as follows. Required for rescue of stalled ribosomes mediated by trans-translation. Binds to transfer-messenger RNA (tmRNA), required for stable association of tmRNA with ribosomes. tmRNA and SmpB together mimic tRNA shape, replacing the anticodon stem-loop with SmpB. tmRNA is encoded by the ssrA gene; the 2 termini fold to resemble tRNA(Ala) and it encodes a 'tag peptide', a short internal open reading frame. During trans-translation Ala-aminoacylated tmRNA acts like a tRNA, entering the A-site of stalled ribosomes, displacing the stalled mRNA. The ribosome then switches to translate the ORF on the tmRNA; the nascent peptide is terminated with the 'tag peptide' encoded by the tmRNA and targeted for degradation. The ribosome is freed to recommence translation, which seems to be the essential function of trans-translation. The chain is SsrA-binding protein from Anoxybacillus flavithermus (strain DSM 21510 / WK1).